Reading from the N-terminus, the 572-residue chain is Excitatory amino acid transporter 2 (572 aa).

The span at 1–11 shows a compositional bias: polar residues; the sequence is MASTEGANNMP. Residues 1–28 form a disordered region; it reads MASTEGANNMPKQVEVRMHDSHLSSDEP. Residues 1-44 lie on the Cytoplasmic side of the membrane; the sequence is MASTEGANNMPKQVEVRMHDSHLSSDEPKHRNLGMRMCDKLGKN. 4 positions are modified to phosphoserine: serine 3, serine 21, serine 24, and serine 25. Positions 14-28 are enriched in basic and acidic residues; it reads VEVRMHDSHLSSDEP. A lipid anchor (S-palmitoyl cysteine) is attached at cysteine 38. The next 3 membrane-spanning stretches (helical) occupy residues 45 to 64, 88 to 108, and 121 to 142; these read LLLS…GGLL, MLKM…LSGL, and MVYY…VLAI. 2 N-linked (GlcNAc...) asparagine glycosylation sites follow: asparagine 205 and asparagine 215. 3 consecutive transmembrane segments (helical) span residues 235-258, 268-295, and 317-338; these read FKDG…MGKM, FFNI…ACLI, and ITVI…YFVV. Residues 344–374 constitute an intramembrane region (discontinuously helical); the sequence is FSFFAGIFQAWITALGTASSAGTLPVTFRCL. 361 to 363 is an L-aspartate binding site; the sequence is ASS. The helical transmembrane segment at 384–410 threads the bilayer; the sequence is VTRFVLPVGATINMDGTALYEAVAAIF. Na(+) is bound by residues glycine 392, threonine 394, and asparagine 396. Residues threonine 400, 441–445, aspartate 474, and asparagine 481 contribute to the L-aspartate site; that span reads IPSAG. Residues 424–457 constitute an intramembrane region (discontinuously helical); the sequence is IVTVSLTATLASIGAASIPSAGLVTMLLILTAVG. The chain crosses the membrane as a helical span at residues 471–492; that stretch reads WLLDRMRTSVNVVGDSFGAGIV. 2 residues coordinate Na(+): asparagine 481 and aspartate 485. Serine 505, serine 520, serine 530, and serine 532 each carry phosphoserine. Tyrosine 537 is subject to Phosphotyrosine. Phosphoserine is present on residues serine 542, serine 558, and serine 562.

This sequence belongs to the dicarboxylate/amino acid:cation symporter (DAACS) (TC 2.A.23) family. SLC1A2 subfamily. Homotrimer. Interacts with AJUBA. Post-translationally, glycosylated. In terms of processing, palmitoylation at Cys-38 is not required for correct subcellular localization, but is important for glutamate uptake activity. As to expression, detected in brain. Detected in embryonic forebrain, especially in globus pallidus, perirhinal cortex, lateral hypothalamus, hippocampus, and on fimbria and axonal pathways connecting the neocortex, basal ganglia and thalamus (at protein level). Isoform GLT1 is expressed in the brain. Isoforms GLT-1A and GLT-1B are expressed in the liver.

It is found in the cell membrane. The enzyme catalyses K(+)(in) + L-glutamate(out) + 3 Na(+)(out) + H(+)(out) = K(+)(out) + L-glutamate(in) + 3 Na(+)(in) + H(+)(in). It catalyses the reaction K(+)(in) + L-aspartate(out) + 3 Na(+)(out) + H(+)(out) = K(+)(out) + L-aspartate(in) + 3 Na(+)(in) + H(+)(in). The catalysed reaction is D-aspartate(out) + K(+)(in) + 3 Na(+)(out) + H(+)(out) = D-aspartate(in) + K(+)(out) + 3 Na(+)(in) + H(+)(in). Functionally, sodium-dependent, high-affinity amino acid transporter that mediates the uptake of L-glutamate and also L-aspartate and D-aspartate. Functions as a symporter that transports one amino acid molecule together with two or three Na(+) ions and one proton, in parallel with the counter-transport of one K(+) ion. Mediates Cl(-) flux that is not coupled to amino acid transport; this avoids the accumulation of negative charges due to aspartate and Na(+) symport. Essential for the rapid removal of released glutamate from the synaptic cleft, and for terminating the postsynaptic action of glutamate. In Mus musculus (Mouse), this protein is Excitatory amino acid transporter 2 (Slc1a2).